Reading from the N-terminus, the 218-residue chain is MSQVIRTLALTGLALAGLSGCVSVPRGQGGAAPAVVGQVSESAQQAETARQAWLQAHPAWSFQGRVAISKGRDGGSGRLDWQQDGPRYHVQLSAPVTRQSWVLTGDTTTGAGRLEGLDGGPRAGADAEQVLLEATGWTIPVNQMPDWVRALRIADAGAARVDLDEHGRPRTVQQDGWTIDFLEWTPASAAQPELPRRIEARNGDAKVRLLVDQWTLSP.

Residues 1 to 20 form the signal peptide; the sequence is MSQVIRTLALTGLALAGLSG. Cysteine 21 carries N-palmitoyl cysteine lipidation. A lipid anchor (S-diacylglycerol cysteine) is attached at cysteine 21.

The protein belongs to the LolB family. Monomer.

It localises to the cell outer membrane. Its function is as follows. Plays a critical role in the incorporation of lipoproteins in the outer membrane after they are released by the LolA protein. The sequence is that of Outer-membrane lipoprotein LolB from Xanthomonas campestris pv. campestris (strain 8004).